The primary structure comprises 503 residues: Maturase K (503 aa).

It belongs to the intron maturase 2 family. MatK subfamily.

It localises to the plastid. The protein resides in the chloroplast. Functionally, usually encoded in the trnK tRNA gene intron. Probably assists in splicing its own and other chloroplast group II introns. The polypeptide is Maturase K (Liquidambar styraciflua (Sweetgum tree)).